The primary structure comprises 179 residues: Isopentenyl-diphosphate Delta-isomerase (179 aa).

The Mn(2+) site is built by His-25 and His-31. The region spanning 29-161 (ELHRAITVYI…PEQFTAWFQL (133 aa)) is the Nudix hydrolase domain. The active site involves Cys-66. Residue Cys-66 participates in Mg(2+) binding. His-68 contributes to the Mn(2+) binding site. Glu-86 contacts Mg(2+). Glu-111 and Glu-113 together coordinate Mn(2+). Residue Glu-113 is part of the active site.

This sequence belongs to the IPP isomerase type 1 family. Homodimer. Mg(2+) is required as a cofactor. It depends on Mn(2+) as a cofactor.

The protein resides in the cytoplasm. It carries out the reaction isopentenyl diphosphate = dimethylallyl diphosphate. The protein operates within isoprenoid biosynthesis; dimethylallyl diphosphate biosynthesis; dimethylallyl diphosphate from isopentenyl diphosphate: step 1/1. In terms of biological role, catalyzes the 1,3-allylic rearrangement of the homoallylic substrate isopentenyl (IPP) to its highly electrophilic allylic isomer, dimethylallyl diphosphate (DMAPP). The polypeptide is Isopentenyl-diphosphate Delta-isomerase (Pectobacterium atrosepticum (strain SCRI 1043 / ATCC BAA-672) (Erwinia carotovora subsp. atroseptica)).